We begin with the raw amino-acid sequence, 642 residues long: Threonine--tRNA ligase (642 aa).

In terms of domain architecture, TGS spans 1 to 61 (MPVITLPDGS…ETDSDLSIIT (61 aa)). The tract at residues 243-534 (DHRKIGKQLD…LIEEYAGKFP (292 aa)) is catalytic. Zn(2+)-binding residues include C334, H385, and H511.

Belongs to the class-II aminoacyl-tRNA synthetase family. In terms of assembly, homodimer. The cofactor is Zn(2+).

It localises to the cytoplasm. The enzyme catalyses tRNA(Thr) + L-threonine + ATP = L-threonyl-tRNA(Thr) + AMP + diphosphate + H(+). Its function is as follows. Catalyzes the attachment of threonine to tRNA(Thr) in a two-step reaction: L-threonine is first activated by ATP to form Thr-AMP and then transferred to the acceptor end of tRNA(Thr). Also edits incorrectly charged L-seryl-tRNA(Thr). The polypeptide is Threonine--tRNA ligase (Shewanella pealeana (strain ATCC 700345 / ANG-SQ1)).